The chain runs to 538 residues: Casein kinase I homolog 1 (538 aa).

Residues 39-61 (SPARSSMTATTAANSNSNSSRDD) are disordered. Residues 41–57 (ARSSMTATTAANSNSNS) are compositionally biased toward low complexity. A Protein kinase domain is found at 69–353 (YKIGKKIGEG…ETADGQYDWM (285 aa)). ATP contacts are provided by residues 75–83 (IGEGSFGVL) and Lys-98. The active-site Proton acceptor is Asp-188. Disordered stretches follow at residues 366–428 (NKKP…KPKL) and 474–527 (QQQL…LAAS). Composition is skewed to low complexity over residues 391-410 (QLQMQQLQMQQLQQQQQQQQ) and 474-498 (QQQLRATGQPPSQPQAQTQSQQFGA). Residues Ser-522, Ser-523, and Ser-527 each carry the phosphoserine modification. S-palmitoyl cysteine attachment occurs at residues Cys-537 and Cys-538.

It belongs to the protein kinase superfamily. CK1 Ser/Thr protein kinase family. Casein kinase I subfamily. Palmitoylated by AKR1.

It is found in the cell membrane. Its subcellular location is the mitochondrion membrane. It catalyses the reaction L-seryl-[protein] + ATP = O-phospho-L-seryl-[protein] + ADP + H(+). The catalysed reaction is L-threonyl-[protein] + ATP = O-phospho-L-threonyl-[protein] + ADP + H(+). In terms of biological role, casein kinases are operationally defined by their preferential utilization of acidic proteins such as caseins as substrates. This chain is Casein kinase I homolog 1 (YCK1), found in Saccharomyces cerevisiae (strain ATCC 204508 / S288c) (Baker's yeast).